The sequence spans 320 residues: Beta-ketoacyl-[acyl-carrier-protein] synthase III (320 aa).

Residues Cys-114 and His-247 contribute to the active site. The tract at residues 248-252 (QANRR) is ACP-binding. The active site involves Asn-277.

Belongs to the thiolase-like superfamily. FabH family. Homodimer.

It localises to the cytoplasm. The catalysed reaction is malonyl-[ACP] + acetyl-CoA + H(+) = 3-oxobutanoyl-[ACP] + CO2 + CoA. It functions in the pathway lipid metabolism; fatty acid biosynthesis. In terms of biological role, catalyzes the condensation reaction of fatty acid synthesis by the addition to an acyl acceptor of two carbons from malonyl-ACP. Catalyzes the first condensation reaction which initiates fatty acid synthesis and may therefore play a role in governing the total rate of fatty acid production. Possesses both acetoacetyl-ACP synthase and acetyl transacylase activities. Its substrate specificity determines the biosynthesis of branched-chain and/or straight-chain of fatty acids. The polypeptide is Beta-ketoacyl-[acyl-carrier-protein] synthase III (Neisseria meningitidis serogroup A / serotype 4A (strain DSM 15465 / Z2491)).